The sequence spans 302 residues: Acetylglutamate kinase (302 aa).

Residues 67–68 (GG), Arg-89, and Asn-189 each bind substrate.

It belongs to the acetylglutamate kinase family. ArgB subfamily.

The protein localises to the cytoplasm. The enzyme catalyses N-acetyl-L-glutamate + ATP = N-acetyl-L-glutamyl 5-phosphate + ADP. It participates in amino-acid biosynthesis; L-arginine biosynthesis; N(2)-acetyl-L-ornithine from L-glutamate: step 2/4. Its function is as follows. Catalyzes the ATP-dependent phosphorylation of N-acetyl-L-glutamate. In Streptomyces clavuligerus, this protein is Acetylglutamate kinase.